The sequence spans 288 residues: uncharacterized protein (288 aa).

Residues 1 to 59 enclose the HTH lysR-type domain; sequence MDKLNAISIFCKVIETQSFTLAAKQQNISVAMASKLVSQLEEHLKTRLLQRTTRKIMPT. Positions 19 to 38 form a DNA-binding region, H-T-H motif; the sequence is FTLAAKQQNISVAMASKLVS.

The protein belongs to the LysR transcriptional regulatory family.

This is an uncharacterized protein from Haemophilus influenzae (strain ATCC 51907 / DSM 11121 / KW20 / Rd).